The sequence spans 653 residues: MAESGDFNGGQPPPHSPLRTTSSGSSSSNNRGPPPPPPPPLVMVRKRLASEMSSNPDYNNSSRPPRRVSHLLDSNYNTVTPQQPPSLTAAATVSSQPNPPLSVCGFSGLPVFPSDRGGRNVMMSVQPMDQDSSSSSASPTVWVDAIIRDLIHSSTSVSIPQLIQNVRDIIFPCNPNLGALLEYRLRSLMLLDPSSSSDPSPQTFEPLYQISNNPSPPQQQQQHQQQQQQHKPPPPPIQQQERENSSTDAPPQPETVTATVPAVQTNTAEALRERKEEIKRQKQDEEGLHLLTLLLQCAEAVSADNLEEANKLLLEISQLSTPYGTSAQRVAAYFSEAMSARLLNSCLGIYAALPSRWMPQTHSLKMVSAFQVFNGISPLVKFSHFTANQAIQEAFEKEDSVHIIDLDIMQGLQWPGLFHILASRPGGPPHVRLTGLGTSMEALQATGKRLSDFADKLGLPFEFCPLAEKVGNLDTERLNVRKREAVAVHWLQHSLYDVTGSDAHTLWLLQRLAPKVVTVVEQDLSHAGSFLGRFVEAIHYYSALFDSLGASYGEESEERHVVEQQLLSKEIRNVLAVGGPSRSGEVKFESWREKMQQCGFKGISLAGNAATQATLLLGMFPSDGYTLVDDNGTLKLGWKDLSLLTASAWTPRS.

2 disordered regions span residues 1–69 (MAES…RRVS) and 193–265 (PSSS…AVQT). The segment covering 17–31 (PLRTTSSGSSSSNNR) has biased composition (low complexity). The segment covering 32 to 41 (GPPPPPPPPL) has biased composition (pro residues). Residues 51–63 (EMSSNPDYNNSSR) show a composition bias toward polar residues. Positions 209-230 (QISNNPSPPQQQQQHQQQQQQH) are enriched in low complexity. The segment covering 246 to 265 (STDAPPQPETVTATVPAVQT) has biased composition (polar residues). Residues 281-650 (QKQDEEGLHL…LSLLTASAWT (370 aa)) enclose the GRAS domain. Positions 288–351 (LHLLTLLLQC…LLNSCLGIYA (64 aa)) are leucine repeat I (LRI). The LxCxE motif motif lies at 295–299 (LQCAE). Residues 370–435 (FQVFNGISPL…GGPPHVRLTG (66 aa)) are VHIID. The short motif at 401–405 (VHIID) is the VHIID element. Residues 445–477 (ATGKRLSDFADKLGLPFEFCPLAEKVGNLDTER) are leucine repeat II (LRII). Positions 486–573 (VAVHWLQHSL…QQLLSKEIRN (88 aa)) are PFYRE. The SAW stretch occupies residues 576 to 650 (AVGGPSRSGE…LSLLTASAWT (75 aa)).

The protein belongs to the GRAS family. In terms of assembly, interacts with SHR, JKD and MGP. Interacts with SIEL. Interacts with RBR1 through its the LxCxE motif. In terms of tissue distribution, expressed in siliques, leaves and roots. Detected in the initial daughter cell before its asymmetric division and remains expressed only in the endodermal cell layer after the division. Expressed in the endodermis or starch sheath of the seedling hypocotyl, in the leaf bundle sheath cells and the root quiescent center.

It localises to the nucleus. Transcription factor required for quiescent center cells specification and maintenance of surrounding stem cells, and for the asymmetric cell division involved in radial pattern formation in roots. Essential for cell division but not differentiation of the ground tissue. Also required for normal shoot gravitropism. Regulates the radial organization of the shoot axial organs. Binds to the promoter of MGP, NUC, RLK and SCL3. Restricts SHR movment and sequesters it into the nucleus of the endodermis. This is Protein SCARECROW from Arabidopsis thaliana (Mouse-ear cress).